The sequence spans 137 residues: Small ribosomal subunit protein uS12 (137 aa).

The disordered stretch occupies residues Met-1 to Lys-57. At Asp-102 the chain carries 3-methylthioaspartic acid.

Belongs to the universal ribosomal protein uS12 family. As to quaternary structure, part of the 30S ribosomal subunit. Contacts proteins S8 and S17. May interact with IF1 in the 30S initiation complex.

In terms of biological role, with S4 and S5 plays an important role in translational accuracy. Functionally, interacts with and stabilizes bases of the 16S rRNA that are involved in tRNA selection in the A site and with the mRNA backbone. Located at the interface of the 30S and 50S subunits, it traverses the body of the 30S subunit contacting proteins on the other side and probably holding the rRNA structure together. The combined cluster of proteins S8, S12 and S17 appears to hold together the shoulder and platform of the 30S subunit. This chain is Small ribosomal subunit protein uS12, found in Streptococcus gordonii (strain Challis / ATCC 35105 / BCRC 15272 / CH1 / DL1 / V288).